The primary structure comprises 995 residues: S1 RNA-binding domain-containing protein 1 (995 aa).

Residues 23–78 (SFSELSSASEEDDKEDSAWEPQKKVPRSRKQPPPKESKPKRMPQVKKNAPQISDGS) form a disordered region. Residue Lys84 forms a Glycyl lysine isopeptide (Lys-Gly) (interchain with G-Cter in SUMO2) linkage. A compositionally biased stretch (basic residues) spans 116–132 (TKRKCAAQPHAVRRTKK). The segment at 116–164 (TKRKCAAQPHAVRRTKKLKVDEETSKASYLEGESNSSETPSTSTVWGGT) is disordered. Residue Lys134 forms a Glycyl lysine isopeptide (Lys-Gly) (interchain with G-Cter in SUMO2) linkage. Residues 146 to 159 (EGESNSSETPSTST) show a composition bias toward low complexity. Glycyl lysine isopeptide (Lys-Gly) (interchain with G-Cter in SUMO2) cross-links involve residues Lys166, Lys167, and Lys183. A Glycyl lysine isopeptide (Lys-Gly) (interchain with G-Cter in SUMO1); alternate cross-link involves residue Lys185. Residue Lys185 forms a Glycyl lysine isopeptide (Lys-Gly) (interchain with G-Cter in SUMO2); alternate linkage. A coiled-coil region spans residues 258–288 (ADSLREVQQTLEELRAVAKKVHSTIQKIKKE). A Phosphoserine modification is found at Ser861. An S1 motif domain is found at 919–992 (GTVLTGKVEN…PRSRITLDLI (74 aa)). Lys955 participates in a covalent cross-link: Glycyl lysine isopeptide (Lys-Gly) (interchain with G-Cter in SUMO2). Ser964 is subject to Phosphoserine.

This chain is S1 RNA-binding domain-containing protein 1 (SRBD1), found in Pongo abelii (Sumatran orangutan).